Consider the following 1124-residue polypeptide: ATP-dependent DNA helicase mph1 (1124 aa).

2 disordered regions span residues 1-103 (MFTL…EARS) and 123-302 (QLTQ…PTQH). 2 stretches are compositionally biased toward acidic residues: residues 7 to 17 (DSSDYFDDDLG) and 169 to 178 (RDDEYDDDEE). The span at 210–222 (TPIIGQQSTTIEA) shows a compositional bias: polar residues. Over residues 226-236 (LLDDIPDDAFD) the composition is skewed to acidic residues. A compositionally biased stretch (polar residues) spans 255-271 (SFTQSTNRPLGVRQTTL). Positions 328–496 (IAQKGLFHNL…AVIDGLDISR (169 aa)) constitute a Helicase ATP-binding domain. 341–348 (LPTGLGKT) is a binding site for ATP. A DEAH box motif is present at residues 444–447 (DEAH). One can recognise a Helicase C-terminal domain in the interval 666–840 (YLKQVVLNHF…GTRFTFHDDM (175 aa)). A compositionally biased stretch (basic and acidic residues) spans 855-873 (KRAIDIPEENTVRDLPEPK). 2 disordered regions span residues 855-923 (KRAI…TPEP) and 1016-1124 (MPKA…DSDD). 2 stretches are compositionally biased toward basic residues: residues 874–886 (RRGR…PKKF) and 906–916 (SKRRVPNKSKA).

It belongs to the DEAD box helicase family. DEAH subfamily. FANCM sub-subfamily. Interacts with the MHF histone-fold complex to form the FANCM-MHF complex.

Its subcellular location is the nucleus. The enzyme catalyses ATP + H2O = ADP + phosphate + H(+). Functionally, ATP-dependent DNA helicase involved in DNA damage repair by homologous recombination and in genome maintenance. Capable of unwinding D-loops. Plays a role in limiting crossover recombinants during mitotic DNA double-strand break (DSB) repair. Component of a FANCM-MHF complex which promotes gene conversion at blocked replication forks, probably by reversal of the stalled fork. This Aspergillus niger (strain ATCC MYA-4892 / CBS 513.88 / FGSC A1513) protein is ATP-dependent DNA helicase mph1.